The sequence spans 97 residues: Putative membrane protein insertion efficiency factor (97 aa).

It belongs to the UPF0161 family.

It is found in the cell inner membrane. Could be involved in insertion of integral membrane proteins into the membrane. The chain is Putative membrane protein insertion efficiency factor from Chlamydia muridarum (strain MoPn / Nigg).